A 93-amino-acid polypeptide reads, in one-letter code: Allatostatin C (93 aa).

The first 23 residues, 1–23 (MSSVRNIAALALVLLVLAEWSAA), serve as a signal peptide directing secretion. The propeptide occupies 24–61 (MPTTDKDKERLLNTVDLIDDDGSIETALINYLFTKQIV). An intrachain disulfide couples Cys-83 to Cys-90.

It localises to the secreted. In terms of biological role, inhibits juvenile hormone biosynthesis. The chain is Allatostatin C from Camponotus floridanus (Florida carpenter ant).